Reading from the N-terminus, the 831-residue chain is MTDNQEIKPKKLTLGNSKLSLNKSFDSLTGAQSFVNAKSKTLVEVRKSSTGSATTLSLNKERNSLDQTVIDANKEEFNRRLSILKKAAEQSQLNDPSKISTLSKLASINQSANSKIEPLETDKEVEQKQQNTEDNKVEVSAKIVQDDKDIPSQIPKKKEETFVKSPLVGMRTRYGIESEKELDKTADSKIIAPKIKLEEPKKIKKADLFNMLSDDESGSCRTRSLASIKRAREKEKRKLASQAPEKVYREVTIPEVIGVGDLANAMSERVADVIKELMKLGILANASQTIDADTAELVATNLGHTVKRVQESDVENVLISDDKVEDLRTRAPVVTVMGHVDHGKTSLLDALKSTDVAAGELGGITQHIGAYRVTLADGRAITFIDTPGHEAFSEMRSRGAKVTDIVIIVVAADDGIKTQTVEAINHAKAAGVPIIVAINKIDKPDIDIERVKNELYVHEIIGEEVGGDVMIIPISALKKINLDKLEEAILLIAEMQDLKANPFGSAAGVVIESKIEQGRGTLTTILVQRGTLRNSDIIIAGTAYGKVKKMTNDKGLEIVEATPSVPVEIQGLNEVPFAGDKFNIVQNEKQAKDIAEYRMRLAKEKKISIAPRSSLEDLFLKASGNSKIKELPLIIKGDVQGSVEAISGSLLKLPSDEIKLRILHSGVGPITESDVSLAHASSAIIVSFNVRAGANALTAAEKEKVDIRYYSIIYHLIDDIKAIMSGMLEPIVREQYIGSAEIRQIFNITKVGKIAGSYVTKGIIKKGAGVRLLRDNVVIHEGKLKTLKRFKDEVKEVREGYECGIAFENYEDIREGDTVEVFELIQEQRQL.

The tr-type G domain maps to 329 to 499; that stretch reads TRAPVVTVMG…LLIAEMQDLK (171 aa). The interval 338–345 is G1; it reads GHVDHGKT. 338-345 provides a ligand contact to GTP; it reads GHVDHGKT. The segment at 363 to 367 is G2; it reads GITQH. Positions 385–388 are G3; that stretch reads DTPG. Residues 385 to 389 and 439 to 442 each bind GTP; these read DTPGH and NKID. Positions 439-442 are G4; that stretch reads NKID. The segment at 475–477 is G5; the sequence is SAL.

Belongs to the TRAFAC class translation factor GTPase superfamily. Classic translation factor GTPase family. IF-2 subfamily.

It localises to the cytoplasm. Functionally, one of the essential components for the initiation of protein synthesis. Protects formylmethionyl-tRNA from spontaneous hydrolysis and promotes its binding to the 30S ribosomal subunits. Also involved in the hydrolysis of GTP during the formation of the 70S ribosomal complex. The chain is Translation initiation factor IF-2 from Rickettsia rickettsii (strain Iowa).